We begin with the raw amino-acid sequence, 361 residues long: Ribosomal RNA large subunit methyltransferase M (361 aa).

S-adenosyl-L-methionine contacts are provided by residues Ser190, 223 to 226, Asp242, Asp262, and Asp280; that span reads CPGG. Residue Lys309 is the Proton acceptor of the active site.

This sequence belongs to the class I-like SAM-binding methyltransferase superfamily. RNA methyltransferase RlmE family. RlmM subfamily. Monomer.

Its subcellular location is the cytoplasm. The catalysed reaction is cytidine(2498) in 23S rRNA + S-adenosyl-L-methionine = 2'-O-methylcytidine(2498) in 23S rRNA + S-adenosyl-L-homocysteine + H(+). Functionally, catalyzes the 2'-O-methylation at nucleotide C2498 in 23S rRNA. The protein is Ribosomal RNA large subunit methyltransferase M of Actinobacillus pleuropneumoniae serotype 7 (strain AP76).